Reading from the N-terminus, the 484-residue chain is Zinc metalloproteinase-disintegrin BlatH1 (484 aa).

An N-terminal signal peptide occupies residues 1–20 (MIQVLLVTICLAALPYQGSS). Residues 21–190 (IILESGNVND…KKASQSNLTP (170 aa)) constitute a propeptide that is removed on maturation. Position 191 is a pyrrolidone carboxylic acid (Glu) (Glu191). The 197-residue stretch at 199–395 (KYVELVIVAD…QNSQCILNEP (197 aa)) folds into the Peptidase M12B domain. Glu202 contacts Ca(2+). Asn259 carries N-linked (GlcNAc...) asparagine glycosylation. Ca(2+) is bound at residue Asp286. The N-linked (GlcNAc...) asparagine glycan is linked to Asn297. Cystine bridges form between Cys310–Cys390, Cys350–Cys374, and Cys352–Cys357. Residue His335 coordinates Zn(2+). Glu336 is an active-site residue. Positions 339 and 345 each coordinate Zn(2+). Asn373 carries N-linked (GlcNAc...) asparagine glycosylation. Positions 390, 393, 405, 408, 412, 415, and 418 each coordinate Ca(2+). A Disintegrin domain is found at 403-484 (PPVCGNEILE…GQSADCPSNG (82 aa)). 7 disulfides stabilise this stretch: Cys406/Cys425, Cys417/Cys435, Cys419/Cys430, Cys429/Cys452, Cys443/Cys449, Cys448/Cys473, and Cys461/Cys480. Positions 465-467 (TDN) match the TDN-tripeptide motif.

This sequence belongs to the venom metalloproteinase (M12B) family. P-II subfamily. P-IIc sub-subfamily. As to quaternary structure, homodimer. Requires Zn(2+) as cofactor. In terms of processing, the N-terminus is blocked. In terms of tissue distribution, expressed by the venom gland.

The protein localises to the secreted. With respect to regulation, platelet aggregation in inhibited by the metalloproteinase inhibitors EDTA and Batimastat. The hemorrhagic activity is not inhibited by the plasma proteinase inhibitor alpha2-macroglobulin, although the SVMP is able to cleave this plasma inhibitor, generating a 90 kDa product. Snake venom zinc metalloprotease-disintegrin that hydrolyzes azocasein, gelatin and fibrinogen (Aalpha and Bbeta chains and partially gamma-chain), and exerts a potent local and systemic hemorrhagic activity in mice. It inhibits ADP- and collagen-induced human platelet aggregation (IC(50) = 0.3 uM and 0.7 uM for ADP and collagen, respectively). This inhibition is dependent of protease activity, and probably occurs through the degradation of an unknown platelet receptor. The chain is Zinc metalloproteinase-disintegrin BlatH1 from Bothriechis lateralis (Side-striped palm pitviper).